Consider the following 357-residue polypeptide: Protein RecA (357 aa).

ATP is bound at residue 67–74 (GPESSGKT).

Belongs to the RecA family.

Its subcellular location is the cytoplasm. Its function is as follows. Can catalyze the hydrolysis of ATP in the presence of single-stranded DNA, the ATP-dependent uptake of single-stranded DNA by duplex DNA, and the ATP-dependent hybridization of homologous single-stranded DNAs. It interacts with LexA causing its activation and leading to its autocatalytic cleavage. The protein is Protein RecA of Leifsonia xyli subsp. xyli (strain CTCB07).